The sequence spans 366 residues: Chorismate synthase (366 aa).

NADP(+) contacts are provided by R48 and R54. FMN-binding positions include 125 to 127 (RSS), 241 to 242 (NA), G285, 300 to 304 (KPTSS), and R326.

The protein belongs to the chorismate synthase family. In terms of assembly, homotetramer. The cofactor is FMNH2.

The enzyme catalyses 5-O-(1-carboxyvinyl)-3-phosphoshikimate = chorismate + phosphate. The protein operates within metabolic intermediate biosynthesis; chorismate biosynthesis; chorismate from D-erythrose 4-phosphate and phosphoenolpyruvate: step 7/7. In terms of biological role, catalyzes the anti-1,4-elimination of the C-3 phosphate and the C-6 proR hydrogen from 5-enolpyruvylshikimate-3-phosphate (EPSP) to yield chorismate, which is the branch point compound that serves as the starting substrate for the three terminal pathways of aromatic amino acid biosynthesis. This reaction introduces a second double bond into the aromatic ring system. The polypeptide is Chorismate synthase (Cereibacter sphaeroides (strain ATCC 17029 / ATH 2.4.9) (Rhodobacter sphaeroides)).